We begin with the raw amino-acid sequence, 131 residues long: MQITDAIADMLTRIRNAGSAKHESVDIPASNLKRSIANILLEEGYIKNFEEISDGKQGVLRVNLKYNNKQNVITGIKRISKPGLRVYAGKDQLPKVLGGLGIAVISTSKGIMTDKKARVEGIGGEVLAFVW.

Belongs to the universal ribosomal protein uS8 family. In terms of assembly, part of the 30S ribosomal subunit. Contacts proteins S5 and S12.

In terms of biological role, one of the primary rRNA binding proteins, it binds directly to 16S rRNA central domain where it helps coordinate assembly of the platform of the 30S subunit. This chain is Small ribosomal subunit protein uS8, found in Ruminiclostridium cellulolyticum (strain ATCC 35319 / DSM 5812 / JCM 6584 / H10) (Clostridium cellulolyticum).